We begin with the raw amino-acid sequence, 437 residues long: Keratin, type I cytoskeletal 13 (437 aa).

The head stretch occupies residues 1–95 (MSCRFQSSSM…GVDGGLLSGN (95 aa)). An omega-N-methylarginine mark is found at R27 and R35. Residues 96-131 (EKITMQNLNDRLASYLDKVRALEAANADLEVKIRDW) form a coil 1A region. An IF rod domain is found at 96–408 (EKITMQNLND…SLLEGQDAKM (313 aa)). Residues 132-150 (HLKQSPASPERDYSAYYKT) form a linker 1 region. A coil 1B region spans residues 151-242 (IEELRIKILE…KNHEEEMKEF (92 aa)). Positions 243-265 (SNQVVGQVNVEMDATPGIDLTRV) are linker 12. The coil 2 stretch occupies residues 266–404 (LAEMREQYEA…ATYRSLLEGQ (139 aa)). The tail stretch occupies residues 405-437 (DAKMTGFNSGGNNTTTSNGSPSSNSGRPDFRKY). The tract at residues 408-437 (MTGFNSGGNNTTTSNGSPSSNSGRPDFRKY) is disordered. A compositionally biased stretch (low complexity) spans 409-430 (TGFNSGGNNTTTSNGSPSSNSG).

This sequence belongs to the intermediate filament family. As to quaternary structure, heterotetramer of two type I and two type II keratins. O-glycosylated; glycans consist of single N-acetylglucosamine residues. As to expression, expressed in tongue epithelia (at protein level). Expressed in upper suprabasal layers of the corneal epithelium (at protein level).

In terms of biological role, type 1 keratin. Maintains postnatal tongue mucosal cell homeostasis and tissue organization in response to mechanical stress, potentially via regulation of the G1/S phase cyclins CCNE1 and CCNE2. This chain is Keratin, type I cytoskeletal 13 (Krt13), found in Mus musculus (Mouse).